Here is a 459-residue protein sequence, read N- to C-terminus: WPP domain-interacting protein 3 (459 aa).

A compositionally biased stretch (polar residues) spans 1–17 (MNESVPDSVEDNGNSVP). The tract at residues 1–78 (MNESVPDSVE…GPVRDEAAPV (78 aa)) is disordered. Residues 52-66 (STRKGFGLKKWRRIK) show a composition bias toward basic residues. 2 consecutive short sequence motifs (nuclear localization signal) follow at residues 60–61 (KK) and 63–64 (RR). The segment covering 67 to 78 (RDGPVRDEAAPV) has biased composition (basic and acidic residues). A Nuclear localization signal 3 motif is present at residues 86–87 (KR). Disordered stretches follow at residues 240 to 266 (KEEV…NNNH) and 308 to 330 (TDEL…TSSG). Positions 251 to 266 (NGNKEDDGESKKNNNH) are enriched in basic and acidic residues. Positions 308–319 (TDELSSDQPSHQ) are enriched in polar residues. Residues 331–375 (SKALILKEKVKLLEHKLEEARAALEAKEARIQELENSKIESELEC) are a coiled coil. The KASH domain occupies 426–459 (KLGFYILTQLILLVSILRFLVLQFSPASRLVIPT). Residues 427–447 (LGFYILTQLILLVSILRFLVL) form a helical membrane-spanning segment.

In terms of assembly, component of Ran complexes at least composed of WIT1 or WIT2, RANGAP1 or RANGAP2, and WIP1 or WIP2 or WIP3. Interacts with RANGAP1, WPP1/MAF1, and WPP2/MAF2. Interacts with SUN1 and SUN2. Core component of the LINC complex which is composed of inner nuclear membrane SUN domain-containing proteins coupled to outer nuclear membrane WIP and WIT proteins. The LINC complex also involves nucleoskeletal proteins CRWN/LINC and possibly KAKU4 and the cytoskeletal myosin KAKU1. Interacts with WIT2. In terms of tissue distribution, expressed in seedlings, roots, stems, leaves, and flowers.

It is found in the nucleus envelope. The protein localises to the nucleus membrane. Mediates and enhances the nuclear envelope docking of RANGAP proteins mediated by WIT1 and WIT2 in the undifferentiated cells of root tips. As component of the SUN-WIP-WIT2-KAKU1 complex, mediates the transfer of cytoplasmic forces to the nuclear envelope (NE), leading to nuclear shape changes. This is WPP domain-interacting protein 3 (WIP3) from Arabidopsis thaliana (Mouse-ear cress).